We begin with the raw amino-acid sequence, 109 residues long: UPF0060 membrane protein PSPA7_1846 (109 aa).

The next 4 membrane-spanning stretches (helical) occupy residues 5 to 25 (LWFVLAAFCEIAGCYAFYLWL), 27 to 47 (LGKSALWVLPGLLSLSLFALL), 59 to 79 (AYAAYGGIYVAASLFWLAFVE), and 84 to 104 (LWSDWLGVALCVLGASIVLFG).

It belongs to the UPF0060 family.

The protein resides in the cell inner membrane. The polypeptide is UPF0060 membrane protein PSPA7_1846 (Pseudomonas paraeruginosa (strain DSM 24068 / PA7) (Pseudomonas aeruginosa (strain PA7))).